A 394-amino-acid polypeptide reads, in one-letter code: Protein NDRG1 (394 aa).

An N-acetylserine modification is found at Ser2. A phosphoserine mark is found at Ser2, Ser319, and Ser326. The tract at residues 325–394 (RSRTASGSSV…AGPKSMEVSC (70 aa)) is disordered. Positions 327–339 (RTASGSSVTSLDG) are enriched in polar residues. Position 328 is a phosphothreonine; by SGK1 (Thr328). 2 positions are modified to phosphoserine; by SGK1: Ser330 and Ser332. A Phosphoserine modification is found at Ser333. Thr335 carries the phosphothreonine modification. Residue Ser336 is modified to Phosphoserine. Repeat copies occupy residues 339 to 348 (GTRSRSHTSE), 349 to 358 (GTRSRSHTSE), and 359 to 368 (GTRSRSHTSE). The segment at 339-368 (GTRSRSHTSEGTRSRSHTSEGTRSRSHTSE) is 3 X 10 AA tandem repeats of G-[PST]-R-S-R-S-H-T-S-E. Thr340 carries the phosphothreonine modification. Residue Ser342 is modified to Phosphoserine. Positions 345 to 371 (HTSEGTRSRSHTSEGTRSRSHTSEGAH) are enriched in basic and acidic residues. Position 346 is a phosphothreonine; by SGK1 (Thr346). The residue at position 352 (Ser352) is a Phosphoserine. Residue Thr356 is modified to Phosphothreonine; by SGK1. Ser362 and Ser364 each carry phosphoserine. Residues Thr366 and Thr375 each carry the phosphothreonine modification.

The protein belongs to the NDRG family. In terms of assembly, interacts with RAB4A (membrane-bound form); the interaction involves NDRG1 in vesicular recycling ofCDH1. Interacts with APOA1, APOA2, PRA1 and RTN1. In terms of processing, under stress conditions, phosphorylated in the C-terminal on many serine and threonine residues. Phosphorylated in vitro by PKA. Phosphorylation enhanced by increased intracellular cAMP levels. Homocysteine induces dephosphorylation. Phosphorylation by SGK1 is cell cycle dependent.

The protein localises to the cytoplasm. It is found in the cytosol. It localises to the cytoskeleton. The protein resides in the microtubule organizing center. Its subcellular location is the centrosome. The protein localises to the nucleus. It is found in the cell membrane. Functionally, stress-responsive protein involved in hormone responses, cell growth, and differentiation. Acts as a tumor suppressor in many cell types. Necessary but not sufficient for p53/TP53-mediated caspase activation and apoptosis. Has a role in cell trafficking notably of the Schwann cell and is necessary for the maintenance and development of the peripheral nerve myelin sheath. Required for vesicular recycling of CDH1 and TF. May also function in lipid trafficking. Protects cells from spindle disruption damage. Functions in p53/TP53-dependent mitotic spindle checkpoint. Regulates microtubule dynamics and maintains euploidy. This chain is Protein NDRG1 (Ndrg1), found in Macaca fascicularis (Crab-eating macaque).